Here is a 402-residue protein sequence, read N- to C-terminus: Probable peptidoglycan glycosyltransferase FtsW (402 aa).

Over 1–24 the chain is Cytoplasmic; sequence MLYRLKLLLSGQNTKKERVRAKLE. A helical membrane pass occupies residues 25-45; it reads IDISIVFVMLGLLIFGWVMVT. Topologically, residues 46–63 are periplasmic; the sequence is SASMVVALDDYNNPYFYS. A helical membrane pass occupies residues 64–84; the sequence is IRQGFFAVIAIFLFLLALLVP. Residues 85-91 are Cytoplasmic-facing; that stretch reads TKNYEKN. The helical transmembrane segment at 92-112 threads the bilayer; the sequence is YNAFFFIMLIVLVAVLVPGVG. Residues 113-121 lie on the Periplasmic side of the membrane; the sequence is KSVNGARRW. Residues 122 to 142 traverse the membrane as a helical segment; that stretch reads IPLIIINIQVAELAKLLAIIF. The Cytoplasmic segment spans residues 143–160; sequence FSGYIAENLPKMTNFKEG. Helical transmembrane passes span 161–181 and 182–202; these read ILTP…QPDF and GSTV…GNKV. Position 203 (Arg-203) is a topological domain, cytoplasmic. The helical transmembrane segment at 204–224 threads the bilayer; the sequence is WYGLLIGAMLIMATMLVIISP. At 225 to 284 the chain is on the periplasmic side; sequence YRMHRITGFLHPWENANGSGYQLVQALIGFGRGGWFGDGLGNGVQKQFFLPEAHTDFITS. The chain crosses the membrane as a helical span at residues 285-305; the sequence is VIAEEIGVIGLMILLMVYLFI. Over 306 to 324 the chain is Cytoplasmic; it reads VFRAMNIAKMAFELKRYYQ. Residues 325 to 345 form a helical membrane-spanning segment; sequence AFLSYGISFWIGFQVFVNIGV. At 346–357 the chain is on the periplasmic side; the sequence is NTGLLPTKGLTL. The helical transmembrane segment at 358–378 threads the bilayer; it reads PLISYGGSSLLIMCFTLGILV. Over 379-402 the chain is Cytoplasmic; sequence RVDFENKLLADTINPKYIYKKVRK.

This sequence belongs to the SEDS family. FtsW subfamily.

Its subcellular location is the cell inner membrane. It catalyses the reaction [GlcNAc-(1-&gt;4)-Mur2Ac(oyl-L-Ala-gamma-D-Glu-L-Lys-D-Ala-D-Ala)](n)-di-trans,octa-cis-undecaprenyl diphosphate + beta-D-GlcNAc-(1-&gt;4)-Mur2Ac(oyl-L-Ala-gamma-D-Glu-L-Lys-D-Ala-D-Ala)-di-trans,octa-cis-undecaprenyl diphosphate = [GlcNAc-(1-&gt;4)-Mur2Ac(oyl-L-Ala-gamma-D-Glu-L-Lys-D-Ala-D-Ala)](n+1)-di-trans,octa-cis-undecaprenyl diphosphate + di-trans,octa-cis-undecaprenyl diphosphate + H(+). Its pathway is cell wall biogenesis; peptidoglycan biosynthesis. Its function is as follows. Peptidoglycan polymerase that is essential for cell division. This Francisella salina protein is Probable peptidoglycan glycosyltransferase FtsW.